A 236-amino-acid chain; its full sequence is tRNA (guanine-N(1)-)-methyltransferase (236 aa).

Residues glycine 114 and 134-139 (IGDYIL) contribute to the S-adenosyl-L-methionine site.

This sequence belongs to the RNA methyltransferase TrmD family. As to quaternary structure, homodimer.

It is found in the cytoplasm. It catalyses the reaction guanosine(37) in tRNA + S-adenosyl-L-methionine = N(1)-methylguanosine(37) in tRNA + S-adenosyl-L-homocysteine + H(+). Specifically methylates guanosine-37 in various tRNAs. The polypeptide is tRNA (guanine-N(1)-)-methyltransferase (Wolbachia pipientis wMel).